The following is a 122-amino-acid chain: Large ribosomal subunit protein uL14 (122 aa).

Belongs to the universal ribosomal protein uL14 family. As to quaternary structure, part of the 50S ribosomal subunit. Forms a cluster with proteins L3 and L19. In the 70S ribosome, L14 and L19 interact and together make contacts with the 16S rRNA in bridges B5 and B8.

Its function is as follows. Binds to 23S rRNA. Forms part of two intersubunit bridges in the 70S ribosome. This Paramagnetospirillum magneticum (strain ATCC 700264 / AMB-1) (Magnetospirillum magneticum) protein is Large ribosomal subunit protein uL14.